Here is a 267-residue protein sequence, read N- to C-terminus: L-aspartate dehydrogenase 2 (267 aa).

Residues alanine 123 and asparagine 189 each coordinate NAD(+). Histidine 219 is an active-site residue.

It belongs to the L-aspartate dehydrogenase family.

It carries out the reaction L-aspartate + NADP(+) + H2O = oxaloacetate + NH4(+) + NADPH + H(+). The catalysed reaction is L-aspartate + NAD(+) + H2O = oxaloacetate + NH4(+) + NADH + H(+). It functions in the pathway cofactor biosynthesis; NAD(+) biosynthesis; iminoaspartate from L-aspartate (dehydrogenase route): step 1/1. Specifically catalyzes the NAD or NADP-dependent dehydrogenation of L-aspartate to iminoaspartate. This chain is L-aspartate dehydrogenase 2, found in Bordetella pertussis (strain Tohama I / ATCC BAA-589 / NCTC 13251).